The chain runs to 257 residues: Transcription factor LBX2 (257 aa).

Residues 1 to 43 (MTSSSKDMKAGSVLQSSGEERRRGPLDQLPPPANSNKPLTPFS) are disordered. The tract at residues 1–46 (MTSSSKDMKAGSVLQSSGEERRRGPLDQLPPPANSNKPLTPFSIED) is required for convergent extension movement and hypaxial myogenesis during gastrulation. Required for the formation of thick and thin myofilaments. Required for myod1 expression in the pectoral fin bud. Required for continuous expression of cxcl12a in the posterior lateral mesoderm at the tail bud stage and in adaxial cells at the 10-somite stage. Residues 126 to 185 (RRKSRTAFTNHQIYELEKRFLYQKYLSPADRDQIAQQLGLTNAQVITWFQNRRAKLKRDL) constitute a DNA-binding region (homeobox). A disordered region spans residues 206 to 257 (LVSMEDMEDAHGGSGPISPSLSPRAFPQSPSSSRGQTTDEFSEEDEEIEVDD). The segment covering 233 to 243 (QSPSSSRGQTT) has biased composition (polar residues). Residues 245–257 (EFSEEDEEIEVDD) show a composition bias toward acidic residues.

As to quaternary structure, interacts (via N-terminus) with tle3a/gro2 (via C-terminus).

Its subcellular location is the nucleus. In terms of biological role, transcription factor required in several developmental processes. Involved in axis formation during embryonic development by inhibiting tle3a/gro2 from binding to tcf7l1a, thereby facilitating ctnnb1-mediated transcription of canonical Wnt/CTNNB1 signaling target genes. Regulates convergent extension movements and hypaxial myogenesis during gastrulation by activating non-canonical Wnt signaling via wnt5b. Required for the formation of myofibrils and fusion of fast muscle precursor cells, potentially via transcriptional regulation of genes specific to thick and thin myofilaments. Regulates the migration of the posterior lateral line primordium during embryonic development, possibly via regulation of cxcl12a/sdf1a expression in the posterior lateral mesoderm, thereby modulating the deposition of neuromasts at correct intervals. This Danio rerio (Zebrafish) protein is Transcription factor LBX2.